A 357-amino-acid chain; its full sequence is DNA replication and repair protein RecF (357 aa).

31–38 (GQNGAGKT) contributes to the ATP binding site.

The protein belongs to the RecF family.

It is found in the cytoplasm. Its function is as follows. The RecF protein is involved in DNA metabolism; it is required for DNA replication and normal SOS inducibility. RecF binds preferentially to single-stranded, linear DNA. It also seems to bind ATP. This chain is DNA replication and repair protein RecF, found in Coxiella burnetii (strain CbuG_Q212) (Coxiella burnetii (strain Q212)).